The following is a 369-amino-acid chain: Histidinol-phosphate aminotransferase 3 (369 aa).

An N6-(pyridoxal phosphate)lysine modification is found at Lys-220.

It belongs to the class-II pyridoxal-phosphate-dependent aminotransferase family. Histidinol-phosphate aminotransferase subfamily. Homodimer. Pyridoxal 5'-phosphate is required as a cofactor.

It catalyses the reaction L-histidinol phosphate + 2-oxoglutarate = 3-(imidazol-4-yl)-2-oxopropyl phosphate + L-glutamate. The protein operates within amino-acid biosynthesis; L-histidine biosynthesis; L-histidine from 5-phospho-alpha-D-ribose 1-diphosphate: step 7/9. In Mesorhizobium japonicum (strain LMG 29417 / CECT 9101 / MAFF 303099) (Mesorhizobium loti (strain MAFF 303099)), this protein is Histidinol-phosphate aminotransferase 3 (hisC3).